Reading from the N-terminus, the 321-residue chain is HPr kinase/phosphorylase (321 aa).

Active-site residues include histidine 143 and lysine 164. Glycine 158–serine 165 serves as a coordination point for ATP. Position 165 (serine 165) interacts with Mg(2+). Aspartate 182 functions as the Proton acceptor; for phosphorylation activity. Proton donor; for dephosphorylation activity in the catalytic mechanism. Residues methionine 206 to asparagine 215 form an important for the catalytic mechanism of both phosphorylation and dephosphorylation region. Position 207 (glutamate 207) interacts with Mg(2+). Arginine 248 is a catalytic residue. Positions proline 269–arginine 274 are important for the catalytic mechanism of dephosphorylation.

It belongs to the HPrK/P family. As to quaternary structure, homohexamer. The cofactor is Mg(2+).

It carries out the reaction [HPr protein]-L-serine + ATP = [HPr protein]-O-phospho-L-serine + ADP + H(+). It catalyses the reaction [HPr protein]-O-phospho-L-serine + phosphate + H(+) = [HPr protein]-L-serine + diphosphate. In terms of biological role, catalyzes the ATP- as well as the pyrophosphate-dependent phosphorylation of a specific serine residue in HPr, a phosphocarrier protein of the phosphoenolpyruvate-dependent sugar phosphotransferase system (PTS). HprK/P also catalyzes the pyrophosphate-producing, inorganic phosphate-dependent dephosphorylation (phosphorolysis) of seryl-phosphorylated HPr (P-Ser-HPr). This Leptospira interrogans serogroup Icterohaemorrhagiae serovar copenhageni (strain Fiocruz L1-130) protein is HPr kinase/phosphorylase.